The primary structure comprises 142 residues: Fusaric acid resistance protein FusB (142 aa).

The disordered stretch occupies residues 73 to 142 (AAPCSRKAST…ASCSPAIRPR (70 aa)). A compositionally biased stretch (low complexity) spans 81–142 (STGSPARSSG…ASCSPAIRPR (62 aa)).

In terms of biological role, involved in the resistance (detoxification) of the fungal toxin fusaric acid. This is Fusaric acid resistance protein FusB (fusB) from Burkholderia cepacia (Pseudomonas cepacia).